The chain runs to 91 residues: Large ribosomal subunit protein uL23c (91 aa).

Belongs to the universal ribosomal protein uL23 family. In terms of assembly, part of the 50S ribosomal subunit.

It is found in the plastid. The protein localises to the chloroplast. Functionally, binds to 23S rRNA. This is Large ribosomal subunit protein uL23c (rpl23) from Chaetosphaeridium globosum (Charophycean green alga).